A 216-amino-acid polypeptide reads, in one-letter code: ATP-dependent dethiobiotin synthetase BioD (216 aa).

ATP is bound at residue 13 to 18; sequence EVGKTY. Thr-17 contributes to the Mg(2+) binding site. Lys-38 is a catalytic residue. Thr-42 lines the substrate pocket. ATP-binding positions include Asp-47 and 112–115; that span reads EGVG. Mg(2+) is bound by residues Asp-47 and Glu-112.

The protein belongs to the dethiobiotin synthetase family. Homodimer. The cofactor is Mg(2+).

The protein localises to the cytoplasm. It carries out the reaction (7R,8S)-7,8-diammoniononanoate + CO2 + ATP = (4R,5S)-dethiobiotin + ADP + phosphate + 3 H(+). It participates in cofactor biosynthesis; biotin biosynthesis; biotin from 7,8-diaminononanoate: step 1/2. Catalyzes a mechanistically unusual reaction, the ATP-dependent insertion of CO2 between the N7 and N8 nitrogen atoms of 7,8-diaminopelargonic acid (DAPA, also called 7,8-diammoniononanoate) to form a ureido ring. The protein is ATP-dependent dethiobiotin synthetase BioD of Endomicrobium trichonymphae.